The primary structure comprises 312 residues: MITFKSFHCSRGWHLWKHWRAFHSHSNSGTLFCQNRTTDKNTHATRVVDLSYDLYDGSVLGPPLVLLHGLFGSKSNFQTIARALVRKTGRKVLTLDARNHGCSPHDDIMTYPAMSADVCQILHQLQITNCVLIGHSMGGKTAMTVALQEPKLVERLVSVDISPAPTVPQTGFPHYIAAMQKVHFEEKMPRSTARRLADEQLSSTVKEASIRQFLLTNLVQENGTFKWRVNLEVISRHLQDLLDFPEFQEPYPGPVLFLGGANSPYISSENYPEIERLFPFANVEYIFGAGHWVHADKTHDFLNAICNFVESA.

Residues 1–14 constitute a mitochondrion transit peptide; sequence MITFKSFHCSRGWH. The region spanning 62–297 is the AB hydrolase-1 domain; that stretch reads PPLVLLHGLF…GAGHWVHADK (236 aa). Catalysis depends on charge relay system residues serine 136, glutamate 232, and histidine 291.

Belongs to the AB hydrolase superfamily. Phosphorylated.

It is found in the mitochondrion. Its subcellular location is the mitochondrion matrix. The enzyme catalyses 1-octadecanoyl-2-(5Z,8Z,11Z,14Z-eicosatetraenoyl)-sn-glycerol + H2O = 2-(5Z,8Z,11Z,14Z-eicosatetraenoyl)-glycerol + octadecanoate + H(+). The catalysed reaction is a 1,2-diacyl-sn-glycerol + H2O = a 2-acylglycerol + a fatty acid + H(+). It catalyses the reaction a 1,3-diacyl-sn-glycerol + H2O = a 1-acyl-sn-glycerol + a fatty acid + H(+). It carries out the reaction 1-octadecanoyl-2-(9Z-octadecenoyl)-sn-glycerol + H2O = 2-(9Z-octadecenoyl)-glycerol + octadecanoate + H(+). The enzyme catalyses 1-octadecanoyl-2-(4Z,7Z,10Z,13Z,16Z,19Z-docosahexaenoyl)-sn-glycerol + H2O = 2-(4Z,7Z,10Z,13Z,16Z,19Z-docosahexaenoyl)-glycerol + octadecanoate + H(+). The catalysed reaction is 1,2-didecanoylglycerol + H2O = decanoylglycerol + decanoate + H(+). Its function is as follows. Catalyzes the hydrolysis of diacylglycerol in vitro and may function as a key regulator in lipid metabolism, namely by regulating the intracellular levels of diacylglycerol. 1,2-diacyl-sn-glycerols are the preferred substrate over 1,3-diacyl-sn-glycerols. The enzyme hydrolyzes stearate in preference to palmitate from the sn-1 position of 1,2-diacyl-sn-glycerols. The polypeptide is sn-1-specific diacylglycerol lipase ABHD11 (Xenopus laevis (African clawed frog)).